Here is a 1005-residue protein sequence, read N- to C-terminus: Regulator of telomere elongation helicase 1 homolog (1005 aa).

In terms of domain architecture, Helicase ATP-binding spans 7–322; it reads AGIPVHFPFE…KEMLLELEKA (316 aa). 42-49 serves as a coordination point for ATP; it reads SPTGTGKT. The [4Fe-4S] cluster site is built by cysteine 145, cysteine 163, cysteine 172, and cysteine 208. Residues 251-254 carry the DEAH box motif; the sequence is DEAH. A Phosphothreonine modification is found at threonine 876. The segment at 893-917 is disordered; it reads NGPLKTEPSEPATTSSSFCPTPAQS.

This sequence belongs to the helicase family. RAD3/XPD subfamily.

The protein resides in the nucleus. It catalyses the reaction ATP + H2O = ADP + phosphate + H(+). Functionally, a probable ATP-dependent DNA helicase implicated in DNA repair and the maintenance of genomic stability. Acts as an anti-recombinase to counteract toxic recombination and limit crossover during meiosis. Regulates meiotic recombination and crossover homeostasis by physically dissociating strand invasion events and thereby promotes noncrossover repair by meiotic synthesis dependent strand annealing (SDSA) as well as disassembly of D loop recombination intermediates. The sequence is that of Regulator of telomere elongation helicase 1 homolog from Drosophila virilis (Fruit fly).